The chain runs to 682 residues: Potassium-transporting ATPase ATP-binding subunit (682 aa).

4 consecutive transmembrane segments (helical) span residues 34 to 54 (PVMF…LAMV), 58 to 78 (IAGS…TVLF), 219 to 239 (IALT…TATL), and 254 to 274 (VLVA…LSAI). Aspartate 307 serves as the catalytic 4-aspartylphosphate intermediate. Residues aspartate 344, glutamate 348, 377-384 (FTAQSRMS), and lysine 395 contribute to the ATP site. Mg(2+)-binding residues include aspartate 518 and aspartate 522. The next 3 helical transmembrane spans lie at 588–608 (FAII…LNVM), 616–636 (AILS…PLAL), and 662–682 (LVVP…LGLA).

It belongs to the cation transport ATPase (P-type) (TC 3.A.3) family. Type IA subfamily. As to quaternary structure, the system is composed of three essential subunits: KdpA, KdpB and KdpC.

Its subcellular location is the cell inner membrane. The enzyme catalyses K(+)(out) + ATP + H2O = K(+)(in) + ADP + phosphate + H(+). Its function is as follows. Part of the high-affinity ATP-driven potassium transport (or Kdp) system, which catalyzes the hydrolysis of ATP coupled with the electrogenic transport of potassium into the cytoplasm. This subunit is responsible for energy coupling to the transport system and for the release of the potassium ions to the cytoplasm. This is Potassium-transporting ATPase ATP-binding subunit from Salmonella paratyphi A (strain ATCC 9150 / SARB42).